We begin with the raw amino-acid sequence, 440 residues long: Calcium/calmodulin-regulated receptor-like kinase 1 (440 aa).

A helical membrane pass occupies residues 8–28; the sequence is LIVGISLGLVIGVVLAISALF. A calmodulin binding region spans residues 28–228; the sequence is FCFRYHRKKS…ARGLEYLHDG (201 aa). Residues 113-380 enclose the Protein kinase domain; that stretch reads CNFTTLIGQG…DIVQVLTRVI (268 aa). Residues 119–127 and lysine 141 contribute to the ATP site; that span reads IGQGAFGPV. A Phosphotyrosine modification is found at tyrosine 186. Aspartate 237 serves as the catalytic Proton acceptor. Serine 241 is subject to Phosphoserine. A Phosphothreonine modification is found at threonine 274. Phosphotyrosine is present on tyrosine 282. Positions 369–440 are calmodulin binding; sequence MRDIVQVLTR…DSSIAEDVIL (72 aa). Positions 386–427 are disordered; it reads RKRQKNSPSPSPRLPPPPPIVEESEGELTANGSLRSEIHRRD. Residues 394-405 are compositionally biased toward pro residues; sequence SPSPRLPPPPPI.

The protein belongs to the protein kinase superfamily. Ser/Thr protein kinase family. In terms of assembly, interacts with calmodulin (CaM) in a calcium- (Ca(2+)-) dependent manner. Binds to MEKK1. Similar transcript expression levels in seedlings, roots, leaves, stems and flowers, and lower levels in siliques, but protein accumulates mostly in 7-day-old seedlings, old roots and young leaves and, to a lower extent, in young roots, old leaves, flowers and siliques (at protein level).

It is found in the cell membrane. It localises to the endosome membrane. The enzyme catalyses L-seryl-[protein] + ATP = O-phospho-L-seryl-[protein] + ADP + H(+). It catalyses the reaction L-threonyl-[protein] + ATP = O-phospho-L-threonyl-[protein] + ADP + H(+). Its activity is regulated as follows. Kinase activity is stimulated by calcium/calmodulin, but blocked by chlorpromazine. Functionally, required for cold tolerance, via the activation of MAP kinases activity. Phosphorylates and activates MEKK1 in response to cold in a calcium-dependent manner. The protein is Calcium/calmodulin-regulated receptor-like kinase 1 of Arabidopsis thaliana (Mouse-ear cress).